The primary structure comprises 273 residues: Gamma-glutamyl cyclotransferase aclK (273 aa).

This sequence belongs to the class-I pyridoxal-phosphate-dependent aminotransferase family.

It carries out the reaction an alpha-(gamma-L-glutamyl)-L-amino acid = 5-oxo-L-proline + an L-alpha-amino acid. It participates in mycotoxin biosynthesis. Gamma-glutamyl cyclotransferase; part of the gene cluster that mediates the biosynthesis of aspirochlorine (or antibiotic A30641), an unusual halogenated spiro compound with distinctive antifungal properties due to selective inhibition of protein biosynthesis, and which is also active against bacteria, viruses, and murine tumor cells. The non-ribosomal peptide synthetase (NRPS) aclP is responsible the formation of the diketopiperazine (DKP) core from the condensation of 2 phenylalanine residues. One Phe residue is tailored into chlorotyrosine by hydroxylation and chlorination, whereas the second Phe undergoes an unprecedented C-C bond cleavage to be converted into glycine. After formation of the DKP, sulfur is incorporated into the DKP by conjugation with glutathione by aclG, followed by its stepwise degradation to the thiol by aclI, aclJ and aclK, and the dithiol oxidation by aclT. In addition, oxygenases (aclB, aclC, aclL and aclO) and O-methyltransferases (aclM and aclU) act as tailoring enzymes to produce the intermediate dechloroaspirochlorine. Ultimately, chlorination of dechloroaspirochlorine by the halogenase aclH is the last step in the aspirochlorine pathway. The sequence is that of Gamma-glutamyl cyclotransferase aclK from Aspergillus oryzae (strain ATCC 42149 / RIB 40) (Yellow koji mold).